The chain runs to 393 residues: Phosphoglycerate kinase (393 aa).

Residues 21 to 23 (DLN), R36, 59 to 62 (HLGR), R113, and R146 each bind substrate. ATP-binding positions include K197, E319, and 345–348 (GGDT).

The protein belongs to the phosphoglycerate kinase family. Monomer.

Its subcellular location is the cytoplasm. It catalyses the reaction (2R)-3-phosphoglycerate + ATP = (2R)-3-phospho-glyceroyl phosphate + ADP. The protein operates within carbohydrate degradation; glycolysis; pyruvate from D-glyceraldehyde 3-phosphate: step 2/5. The chain is Phosphoglycerate kinase from Nitratidesulfovibrio vulgaris (strain ATCC 29579 / DSM 644 / CCUG 34227 / NCIMB 8303 / VKM B-1760 / Hildenborough) (Desulfovibrio vulgaris).